A 95-amino-acid polypeptide reads, in one-letter code: Aspartyl/glutamyl-tRNA(Asn/Gln) amidotransferase subunit C (95 aa).

The protein belongs to the GatC family. Heterotrimer of A, B and C subunits.

It catalyses the reaction L-glutamyl-tRNA(Gln) + L-glutamine + ATP + H2O = L-glutaminyl-tRNA(Gln) + L-glutamate + ADP + phosphate + H(+). It carries out the reaction L-aspartyl-tRNA(Asn) + L-glutamine + ATP + H2O = L-asparaginyl-tRNA(Asn) + L-glutamate + ADP + phosphate + 2 H(+). Allows the formation of correctly charged Asn-tRNA(Asn) or Gln-tRNA(Gln) through the transamidation of misacylated Asp-tRNA(Asn) or Glu-tRNA(Gln) in organisms which lack either or both of asparaginyl-tRNA or glutaminyl-tRNA synthetases. The reaction takes place in the presence of glutamine and ATP through an activated phospho-Asp-tRNA(Asn) or phospho-Glu-tRNA(Gln). The chain is Aspartyl/glutamyl-tRNA(Asn/Gln) amidotransferase subunit C from Thioalkalivibrio sulfidiphilus (strain HL-EbGR7).